The sequence spans 264 residues: COP9 signalosome complex subunit 7b (264 aa).

An N-acetylalanine modification is found at alanine 2. A PCI domain is found at 2–159 (AGEQKPSSNL…QLLEVDFCIG (158 aa)). Positions 194–237 (RANQYKENHHRTQQQVEAEVSNIKKTLKATASSSAQEMEQQLAE) form a coiled coil. The segment covering 223–232 (TASSSAQEME) has biased composition (polar residues). The tract at residues 223 to 264 (TASSSAQEMEQQLAERECPPHTEQRQPTKKMSKVKGLVSSRH) is disordered. The segment covering 235–248 (LAERECPPHTEQRQ) has biased composition (basic and acidic residues).

Belongs to the CSN7/EIF3M family. CSN7 subfamily. Component of the CSN complex, composed of COPS1/GPS1, COPS2, COPS3, COPS4, COPS5, COPS6, COPS7 (COPS7A or COPS7B) and COPS8 and COPS9. In the complex, it probably interacts directly with COPS1, COPS2, COPS4, COPS5, COPS6 and COPS8. Interacts with EIF3S6.

The protein resides in the cytoplasm. The protein localises to the nucleus. Functionally, component of the COP9 signalosome complex (CSN), a complex involved in various cellular and developmental processes. The CSN complex is an essential regulator of the ubiquitin (Ubl) conjugation pathway by mediating the deneddylation of the cullin subunits of SCF-type E3 ligase complexes, leading to decrease the Ubl ligase activity of SCF-type complexes such as SCF, CSA or DDB2. The complex is also involved in phosphorylation of p53/TP53, JUN, I-kappa-B-alpha/NFKBIA, ITPK1 and IRF8/ICSBP, possibly via its association with CK2 and PKD kinases. CSN-dependent phosphorylation of TP53 and JUN promotes and protects degradation by the Ubl system, respectively. In Mus musculus (Mouse), this protein is COP9 signalosome complex subunit 7b (Cops7b).